Reading from the N-terminus, the 279-residue chain is Undecaprenyl-diphosphatase (279 aa).

8 helical membrane-spanning segments follow: residues 2–22 (LIIE…TEWL), 44–64 (AFIE…VMLI), 85–105 (WQLW…AVPL), 113–133 (FYFM…FIWI), 163–183 (VLSI…AIIL), 188–208 (TVAA…YSGL), 223–243 (AQVL…LLAI), and 255–275 (FTIF…YSFF).

This sequence belongs to the UppP family.

It is found in the cell membrane. It carries out the reaction di-trans,octa-cis-undecaprenyl diphosphate + H2O = di-trans,octa-cis-undecaprenyl phosphate + phosphate + H(+). In terms of biological role, catalyzes the dephosphorylation of undecaprenyl diphosphate (UPP). Confers resistance to bacitracin. The chain is Undecaprenyl-diphosphatase from Streptococcus pyogenes serotype M12 (strain MGAS2096).